A 236-amino-acid polypeptide reads, in one-letter code: Uridylate kinase (236 aa).

10-13 (KLSG) serves as a coordination point for ATP. Gly-52 is a binding site for UMP. Gly-53 and Arg-57 together coordinate ATP. UMP is bound by residues Asp-72 and 133–140 (TGNPFFTT). The ATP site is built by Thr-160, Tyr-166, and Asp-169.

Belongs to the UMP kinase family. In terms of assembly, homohexamer.

The protein localises to the cytoplasm. It catalyses the reaction UMP + ATP = UDP + ADP. The protein operates within pyrimidine metabolism; CTP biosynthesis via de novo pathway; UDP from UMP (UMPK route): step 1/1. Its activity is regulated as follows. Inhibited by UTP. Functionally, catalyzes the reversible phosphorylation of UMP to UDP. This is Uridylate kinase from Phocaeicola vulgatus (strain ATCC 8482 / DSM 1447 / JCM 5826 / CCUG 4940 / NBRC 14291 / NCTC 11154) (Bacteroides vulgatus).